A 336-amino-acid chain; its full sequence is Holliday junction branch migration complex subunit RuvB (336 aa).

A large ATPase domain (RuvB-L) region spans residues 1–182; it reads MAKRMITTEL…FGVVHRLEFY (182 aa). ATP contacts are provided by residues L21, R22, G63, K66, T67, T68, 129-131, R172, Y182, and R219; that span reads EDY. T67 contributes to the Mg(2+) binding site. Positions 183 to 253 are small ATPAse domain (RuvB-S); sequence TTEELKEIIT…VARFALDILE (71 aa). Positions 256 to 336 are head domain (RuvB-H); sequence KLGLDHIDRQ…GLPYENKELS (81 aa). The DNA site is built by R311 and R316.

Belongs to the RuvB family. In terms of assembly, homohexamer. Forms an RuvA(8)-RuvB(12)-Holliday junction (HJ) complex. HJ DNA is sandwiched between 2 RuvA tetramers; dsDNA enters through RuvA and exits via RuvB. An RuvB hexamer assembles on each DNA strand where it exits the tetramer. Each RuvB hexamer is contacted by two RuvA subunits (via domain III) on 2 adjacent RuvB subunits; this complex drives branch migration. In the full resolvosome a probable DNA-RuvA(4)-RuvB(12)-RuvC(2) complex forms which resolves the HJ.

Its subcellular location is the cytoplasm. The enzyme catalyses ATP + H2O = ADP + phosphate + H(+). In terms of biological role, the RuvA-RuvB-RuvC complex processes Holliday junction (HJ) DNA during genetic recombination and DNA repair, while the RuvA-RuvB complex plays an important role in the rescue of blocked DNA replication forks via replication fork reversal (RFR). RuvA specifically binds to HJ cruciform DNA, conferring on it an open structure. The RuvB hexamer acts as an ATP-dependent pump, pulling dsDNA into and through the RuvAB complex. RuvB forms 2 homohexamers on either side of HJ DNA bound by 1 or 2 RuvA tetramers; 4 subunits per hexamer contact DNA at a time. Coordinated motions by a converter formed by DNA-disengaged RuvB subunits stimulates ATP hydrolysis and nucleotide exchange. Immobilization of the converter enables RuvB to convert the ATP-contained energy into a lever motion, pulling 2 nucleotides of DNA out of the RuvA tetramer per ATP hydrolyzed, thus driving DNA branch migration. The RuvB motors rotate together with the DNA substrate, which together with the progressing nucleotide cycle form the mechanistic basis for DNA recombination by continuous HJ branch migration. Branch migration allows RuvC to scan DNA until it finds its consensus sequence, where it cleaves and resolves cruciform DNA. In Lachnoclostridium phytofermentans (strain ATCC 700394 / DSM 18823 / ISDg) (Clostridium phytofermentans), this protein is Holliday junction branch migration complex subunit RuvB.